Consider the following 208-residue polypeptide: Thymidylate kinase (208 aa).

Position 7-14 (7-14 (GIDGSGKS)) interacts with ATP.

Belongs to the thymidylate kinase family.

The catalysed reaction is dTMP + ATP = dTDP + ADP. In terms of biological role, phosphorylation of dTMP to form dTDP in both de novo and salvage pathways of dTTP synthesis. The polypeptide is Thymidylate kinase (Kosmotoga olearia (strain ATCC BAA-1733 / DSM 21960 / TBF 19.5.1)).